The following is a 309-amino-acid chain: Probable 2,4-dienoyl-CoA reductase decr-1.2 [(3E)-enoyl-CoA-producing] (309 aa).

NADP(+) is bound by residues 28 to 60 (VLVT…RRME), 32 to 37 (GGGTGI), R57, and D83. R57 provides a ligand contact to substrate. Residues F116 and S124 each contribute to the substrate site. The active-site Proton acceptor is Y166. NADP(+)-binding positions include K181 and 207–210 (PGPI). R218 serves as a coordination point for substrate.

The protein belongs to the short-chain dehydrogenases/reductases (SDR) family. 2,4-dienoyl-CoA reductase subfamily.

It catalyses the reaction a (2E,4E)-dienoyl-CoA + NADPH + H(+) = a 4,5-saturated-(3E)-enoyl-CoA + NADP(+). The catalysed reaction is a (2E,4Z)-dienoyl-CoA + NADPH + H(+) = a 4,5-saturated-(3E)-enoyl-CoA + NADP(+). Auxiliary enzyme of beta-oxidation. It participates in the metabolism of unsaturated fatty enoyl-CoA esters having double bonds in both even- and odd-numbered positions. Catalyzes the NADP-dependent reduction of 2,4-dienoyl-CoA to yield trans-3-enoyl-CoA. In Caenorhabditis elegans, this protein is Probable 2,4-dienoyl-CoA reductase decr-1.2 [(3E)-enoyl-CoA-producing].